Consider the following 615-residue polypeptide: Elongation factor 4 (615 aa).

In terms of domain architecture, tr-type G spans 17–198; the sequence is ASIRNFCIIA…RVSRTIPAPV (182 aa). GTP contacts are provided by residues 29-34 and 145-148; these read DHGKST and NKID.

Belongs to the TRAFAC class translation factor GTPase superfamily. Classic translation factor GTPase family. LepA subfamily.

Its subcellular location is the cell membrane. It catalyses the reaction GTP + H2O = GDP + phosphate + H(+). Functionally, required for accurate and efficient protein synthesis under certain stress conditions. May act as a fidelity factor of the translation reaction, by catalyzing a one-codon backward translocation of tRNAs on improperly translocated ribosomes. Back-translocation proceeds from a post-translocation (POST) complex to a pre-translocation (PRE) complex, thus giving elongation factor G a second chance to translocate the tRNAs correctly. Binds to ribosomes in a GTP-dependent manner. The sequence is that of Elongation factor 4 from Clavibacter michiganensis subsp. michiganensis (strain NCPPB 382).